The primary structure comprises 162 residues: UPF0262 protein AZC_3148 (162 aa).

The protein belongs to the UPF0262 family.

In Azorhizobium caulinodans (strain ATCC 43989 / DSM 5975 / JCM 20966 / LMG 6465 / NBRC 14845 / NCIMB 13405 / ORS 571), this protein is UPF0262 protein AZC_3148.